The following is a 96-amino-acid chain: Methanol dehydrogenase [cytochrome c] subunit 2 (96 aa).

Residues 1–22 (MKTTLIAAAIVALSGLAAPALA) form the signal peptide. An intrachain disulfide couples cysteine 28 to cysteine 34. A disordered region spans residues 45 to 75 (IAGSKYDPKHDPKELNKQADSIKQMEERNKK). A compositionally biased stretch (basic and acidic residues) spans 50 to 61 (YDPKHDPKELNK).

This sequence belongs to the methanol dehydrogenase subunit 2 family. As to quaternary structure, heterotetramer composed of 2 alpha and 2 beta subunits.

The protein resides in the periplasm. It catalyses the reaction 2 Fe(III)-[cytochrome cL] + a primary alcohol = 2 Fe(II)-[cytochrome cL] + an aldehyde + 2 H(+). Functionally, catalyzes the oxidation of primary alcohols including methanol. In Methylorubrum extorquens (strain ATCC 14718 / DSM 1338 / JCM 2805 / NCIMB 9133 / AM1) (Methylobacterium extorquens), this protein is Methanol dehydrogenase [cytochrome c] subunit 2 (moxI).